The chain runs to 1037 residues: MGVALTRLAQWTAAGYETGTLEITPLNESILNEITKFVESFSYKYPQEAKFVFVEPLEWKTYLEPSAFELGYVVSATTAESEETGKDGQPLLFLSVPYIKVRSFGQLSQLLSIATDSKLQEAQACIEANRDPVVKILGPDYNEMKEDPTRLTLLDTIIKDKETYMKRKVAILLKQLDLHLLNHSLKYISLEISLNPGTFKKDIELLKRFSGKGEQTVLESIEYTSDYEFSNGCRAPPWRQIQGEICYVLVKPHDMETLCLTCSTEGVFLNGGKTEEEGEINYERKGEIYKDLVTCLKDKSPVFSENMSKHEIRFTEEQQKDNQIFEKPKTEDGHSSVAGSEKSKIEKISFGKSPMTKRLEPSLNWRVTVDYKDHKSSIKDSQEEKQGKLEKSSSVSVAPSRAQSHRKGGEKVEETVSESSSESEEDEEPPDHRQEANADLPSEYWQIQKLVKYLKGGNQTATVIALCSMRDFNLAQETCQLAIRDVGGLEVLINLLDTDEVKCKIGSLKILKEISHNPQIRRNIVDLGGLPIMVNILDSPHKSLKCLSAETIANVAKFKRARRAVRQHGGITKLVALLDCGQNSTEPTQPSLYETRDVEVARCGALALWSCSKSHSNKEAIRKAGGIPLLARLLKTSHENMLIPVVGTLQECASEENYRAAIKAERIIENLVKNLNSENEQLQEHCAMAIYQCAEDEETRDLVRLHGGLKPLASLLNNTDNKERLAAVTGAIWKCSISKENVIKFREYKAIETLVGLLTDQPEEVLVNVVGALGECCQEYENRVLVRKCGGIQPLVNLLVGINQALLVNVTKAVGACAVEPESMAIIDRLDGVRLLWSLLKNPHPDVKASAAWALCPCIENAKDAGEMVRSFVGGLELVVNLLKSDNKEVLASVCAAITNIAKDQENLAVITDHGVVPLLSKLANTNNDKLRRHLAEAISRCCMWGRNRVAFGEHKAVAPLVRYLKSNDTNVHRATAQALYQLSEDADNCITMHENGAVKLLLDMVGSPDQDLQEAAAGCISNIRRLALATEKARYN.

2 stretches are compositionally biased toward basic and acidic residues: residues 316 to 334 and 376 to 391; these read EEQQ…EDGH and SSIK…KLEK. Disordered stretches follow at residues 316–353 and 376–439; these read EEQQ…FGKS and SSIK…ANAD. ARM repeat units follow at residues 477-516, 518-557, 528-570, 615-654, 656-695, 739-778, 821-860, 864-903, 905-944, and 946-985; these read ETCQ…EISH, PQIR…NVAK, GGLP…QHGG, HSNK…ECAS, ENYR…QCAE, KENV…ECCQ, PESM…PCIE, DAGE…NIAK, QENL…RCCM, and GRNR…QLSE. An N6-methyllysine modification is found at Lys-545.

As to quaternary structure, component of the outer dynein arm-docking complex along with ODAD1, ODAD3, and ODAD4. Interacts with CFAP61. Highly expressed in testis. In males, also detected at lower levels in lung, brain, liver and muscle. In females, detected in ovary.

The protein localises to the cytoplasm. It is found in the cytoskeleton. Its subcellular location is the cilium axoneme. It localises to the cilium basal body. Functionally, component of the outer dynein arm-docking complex (ODA-DC) that mediates outer dynein arms (ODA) binding onto the doublet microtubule. Involved in mediating assembly of both ODAs and their axonemal docking complex onto ciliary microtubules. The protein is Outer dynein arm-docking complex subunit 2 of Mus musculus (Mouse).